Consider the following 163-residue polypeptide: Cytochrome b6-f complex subunit 4 (163 aa).

3 consecutive transmembrane segments (helical) span residues 36-56, 95-115, and 131-151; these read LLYI…GLAV, LLGV…PFLE, and TVFL…TLPI.

This sequence belongs to the cytochrome b family. PetD subfamily. As to quaternary structure, the 4 large subunits of the cytochrome b6-f complex are cytochrome b6, subunit IV (17 kDa polypeptide, petD), cytochrome f and the Rieske protein, while the 4 small subunits are petG, petL, petM and petN. The complex functions as a dimer.

The protein localises to the plastid. The protein resides in the chloroplast thylakoid membrane. Its function is as follows. Component of the cytochrome b6-f complex, which mediates electron transfer between photosystem II (PSII) and photosystem I (PSI), cyclic electron flow around PSI, and state transitions. The protein is Cytochrome b6-f complex subunit 4 of Drimys granadensis.